A 317-amino-acid chain; its full sequence is Hps1-dma1 cluster cytochrome P450 monooxygenase cyp3.1 (317 aa).

Residues 183–205 (PAIETDRKTSSHSRSPTALADKQ) form a disordered region. Residue C260 coordinates heme.

The protein belongs to the cytochrome P450 family. The cofactor is heme.

It functions in the pathway secondary metabolite biosynthesis. Its function is as follows. Cytochrome P450 monooxygenase; part of the hps1-dma1 gene cluster that probably mediates the biosynthesis a derivative of cyclopiazonic acid (CPA). The hybrid polyketide synthase-nonribosomal peptide synthetase (PKS-NRPS) nps1 might incorporates acetyl-CoA, malonyl-CoA, and tryptophan (Trp) and utilizes a C-terminal redox-incompetent reductase domain to make and release the tryptophan tetramic acid, cyclo-acetoacetyl-L-tryptophan (c-AATrp), as the first intermediate in the pathway. In addition, the cluster also includes the tryptophan dimethylallyltransferase dma1, the FAD-dependent oxidoreductase toxD, the cytochrome P450 monooxygenase cyp3.1 and the methyltransferase DOTSEDRAFT_139328; the latter 2 being not present in all CPA-producing fungi but involved in additional modifications that occur in biosynthesis the of a range of CPA and CPA-like products. Further studies are required to clarify whether the CPA-like hps1-dma1 cluster is functional or a non-functional relic reflecting evolution of D.septosporum. The chain is Hps1-dma1 cluster cytochrome P450 monooxygenase cyp3.1 (cyp3.1) from Dothistroma septosporum (strain NZE10 / CBS 128990) (Red band needle blight fungus).